A 242-amino-acid chain; its full sequence is tRNA (guanine-N(1)-)-methyltransferase (242 aa).

S-adenosyl-L-methionine is bound by residues Gly-113 and 133-138; that span reads IGDYVL.

This sequence belongs to the RNA methyltransferase TrmD family. In terms of assembly, homodimer.

Its subcellular location is the cytoplasm. It carries out the reaction guanosine(37) in tRNA + S-adenosyl-L-methionine = N(1)-methylguanosine(37) in tRNA + S-adenosyl-L-homocysteine + H(+). In terms of biological role, specifically methylates guanosine-37 in various tRNAs. This Shewanella sediminis (strain HAW-EB3) protein is tRNA (guanine-N(1)-)-methyltransferase.